A 72-amino-acid polypeptide reads, in one-letter code: Bowman-Birk type proteinase inhibitor 2a (72 aa).

Disulfide bonds link C8–C61, C9–C24, C12–C57, C14–C22, C31–C38, C35–C50, and C40–C48.

As to quaternary structure, dimer.

Inhibits trypsin (IC(50)=0.9 nM) and alpha-chymotrypsin (IC(50)=1.1 nM). The protein is Bowman-Birk type proteinase inhibitor 2a of Lathyrus sativus (White vetchling).